A 691-amino-acid polypeptide reads, in one-letter code: Elongation factor G (691 aa).

Residues 8–283 (KRVRNIGIAA…AVVAYLPAPD (276 aa)) form the tr-type G domain. GTP contacts are provided by residues 17-24 (AHIDAGKT), 81-85 (DTPGH), and 135-138 (NKMD).

Belongs to the TRAFAC class translation factor GTPase superfamily. Classic translation factor GTPase family. EF-G/EF-2 subfamily.

The protein localises to the cytoplasm. Its function is as follows. Catalyzes the GTP-dependent ribosomal translocation step during translation elongation. During this step, the ribosome changes from the pre-translocational (PRE) to the post-translocational (POST) state as the newly formed A-site-bound peptidyl-tRNA and P-site-bound deacylated tRNA move to the P and E sites, respectively. Catalyzes the coordinated movement of the two tRNA molecules, the mRNA and conformational changes in the ribosome. The sequence is that of Elongation factor G from Campylobacter lari (strain RM2100 / D67 / ATCC BAA-1060).